The sequence spans 422 residues: Probable D-serine dehydratase (422 aa).

At Lys-105 the chain carries N6-(pyridoxal phosphate)lysine.

It belongs to the serine/threonine dehydratase family. DsdA subfamily. Pyridoxal 5'-phosphate is required as a cofactor.

The enzyme catalyses D-serine = pyruvate + NH4(+). In Carboxydothermus hydrogenoformans (strain ATCC BAA-161 / DSM 6008 / Z-2901), this protein is Probable D-serine dehydratase.